We begin with the raw amino-acid sequence, 105 residues long: MTANRLTLSGTVCKTPTRKVSPSGIPHCQFVLEHRSVQVEAGFTRQAWCRMPVIISGKAHQAITQSITVGTPLTVSGFISSHQGRNGLNKMVLHAEQIELIDSGD.

Residues 1–102 (MTANRLTLSG…LHAEQIELID (102 aa)) enclose the SSB domain.

Belongs to the PriB family. As to quaternary structure, homodimer. Interacts with PriA and DnaT. Component of the replication restart primosome. Primosome assembly occurs via a 'hand-off' mechanism. PriA binds to replication forks, subsequently PriB then DnaT bind; DnaT then displaces ssDNA to generate the helicase loading substrate.

Its function is as follows. Involved in the restart of stalled replication forks, which reloads the replicative helicase on sites other than the origin of replication; the PriA-PriB pathway is the major replication restart pathway. During primosome assembly it facilitates complex formation between PriA and DnaT on DNA; stabilizes PriA on DNA. Stimulates the DNA unwinding activity of PriA helicase. In Serratia proteamaculans (strain 568), this protein is Replication restart protein PriB.